A 297-amino-acid polypeptide reads, in one-letter code: Cell division protein FtsX (297 aa).

The Cytoplasmic segment spans residues 1–21 (MRFGFLLNEVLTGFRRNVTMT). The helical transmembrane segment at 22–42 (IAMILTTAISVGLFGGGMLVV) threads the bilayer. Residues 43-171 (RLADSSRAIY…LFAVLDGLSN (129 aa)) are Extracellular-facing. Residues 172-192 (AAFAVALVQAIGAILLIANMV) form a helical membrane-spanning segment. The Cytoplasmic portion of the chain corresponds to 193 to 219 (QVAAYTRRTEIGIMRLVGASRWYTQLP). Residues 220–240 (FLVEAMLAATMGVGIAVAGLM) traverse the membrane as a helical segment. Residues 241-267 (VVRALFLENALNQFYQANLIAKVDYAD) lie on the Extracellular side of the membrane. A helical transmembrane segment spans residues 268–288 (ILFITPWLLLLGVAMSGLTAY). Residues 289 to 297 (LTLRLYVRR) lie on the Cytoplasmic side of the membrane.

This sequence belongs to the ABC-4 integral membrane protein family. FtsX subfamily. Forms a membrane-associated complex with FtsE.

It localises to the cell membrane. Part of the ABC transporter FtsEX involved in cellular division. In Mycobacterium tuberculosis (strain ATCC 25177 / H37Ra), this protein is Cell division protein FtsX.